Reading from the N-terminus, the 173-residue chain is C-phycocyanin beta subunit (173 aa).

Position 73 is an N4-methylasparagine (Asn73). Positions 83 and 154 each coordinate (2R,3E)-phycocyanobilin.

The protein belongs to the phycobiliprotein family. In terms of assembly, heterodimer of an alpha and a beta subunit, which further assembles into trimers and the trimers into hexamers. Post-translationally, contains two covalently linked bilin chromophores.

It localises to the cellular thylakoid membrane. In terms of biological role, light-harvesting photosynthetic bile pigment-protein from the phycobiliprotein complex (phycobilisome, PBS). Phycocyanin is the major phycobiliprotein in the PBS rod. The sequence is that of C-phycocyanin beta subunit (cpcB1) from Synechococcus elongatus (strain ATCC 33912 / PCC 7942 / FACHB-805) (Anacystis nidulans R2).